The primary structure comprises 256 residues: Calsenilin (256 aa).

Positions 1–22 (MQRTKEAMKASDGSLLGDPGRI) are disordered. Position 14 is a phosphoserine (Ser-14). Residue Lys-26 forms a Glycyl lysine isopeptide (Lys-Gly) (interchain with G-Cter in SUMO1) linkage. Residues Cys-45 and Cys-46 are each lipidated (S-palmitoyl cysteine). Phosphoserine is present on residues Ser-60 and Ser-63. Positions 67 to 123 (LELSTVRHQPEGLDQLQAQTKFTKKELQSLYRGFKNECPTGLVDEDTFKLIYSQFFP) constitute an EF-hand 1; degenerate domain. Lys-90 participates in a covalent cross-link: Glycyl lysine isopeptide (Lys-Gly) (interchain with G-Cter in SUMO1). EF-hand domains are found at residues 126 to 161 (DATTYAHFLFNAFDADGNGAIHFEDFVVGLSILLRG), 162 to 197 (TVHEKLKWAFNLYDINKDGYITKEEMLAIMKSIYDM), and 210 to 245 (APLEHVERFFQKMDRNQDGVVTIDEFLETCQKDENI). Residues Asp-175, Asn-177, Asp-179, Tyr-181, Glu-186, Asp-223, Asn-225, Asp-227, and Glu-234 each contribute to the Ca(2+) site. The tract at residues 243 to 256 (ENIMSSMQLFENVI) is interaction with KCND2.

This sequence belongs to the recoverin family. As to quaternary structure, binds to DNA as a homomultimer. Dimerization is induced by binding to calcium. Interacts with the C-terminus of PSEN1 and PSEN2 and with PSEN2 CTF subunit. Associates with KCN1. Component of heteromultimeric potassium channels. Identified in potassium channel complexes containing KCND1, KCND2, KCND3, KCNIP1, KCNIP2, KCNIP3, KCNIP4, DPP6 and DPP10. Interacts with KCND2 and KCND3. In terms of processing, palmitoylated. Palmitoylation enhances association with the plasma membrane. Post-translationally, proteolytically cleaved by caspase-3. As to expression, detected in brain cortex, thalamus, dentate gyrus and cerebellum (at protein level). Expressed in brain. Colocalizes with KCND2 in excitatory neurons including cortical and hippocampal CA1 pyramidal cells.

The protein resides in the cytoplasm. The protein localises to the cell membrane. It localises to the endoplasmic reticulum. It is found in the golgi apparatus. Its subcellular location is the nucleus. Its function is as follows. Calcium-dependent transcriptional repressor that binds to the DRE element of genes including PDYN and FOS. Affinity for DNA is reduced upon binding to calcium and enhanced by binding to magnesium. Seems to be involved in nociception. Functionally, regulatory subunit of Kv4/D (Shal)-type voltage-gated rapidly inactivating A-type potassium channels, such as KCND2/Kv4.2 and KCND3/Kv4.3. Modulates channel expression at the cell membrane, gating characteristics, inactivation kinetics and rate of recovery from inactivation in a calcium-dependent and isoform-specific manner. In terms of biological role, may play a role in the regulation of PSEN2 proteolytic processing and apoptosis. Together with PSEN2 involved in modulation of amyloid-beta formation. This chain is Calsenilin (Kcnip3), found in Rattus norvegicus (Rat).